Consider the following 80-residue polypeptide: Bowman-Birk type proteinase inhibitor DE-4 (80 aa).

A compositionally biased stretch (acidic residues) spans 1-10 (DDDHSDDEPR). The interval 1-29 (DDDHSDDEPRESESSKPCCSSCCTRSRPP) is disordered. Over residues 15-29 (SKPCCSSCCTRSRPP) the composition is skewed to low complexity. 7 disulfides stabilise this stretch: C18–C71, C19–C33, C22–C67, C23–C31, C41–C48, C45–C60, and C50–C58.

Belongs to the Bowman-Birk serine protease inhibitor family.

This is Bowman-Birk type proteinase inhibitor DE-4 from Philenoptera violacea (Apple-leaf).